The following is a 192-amino-acid chain: Holliday junction branch migration complex subunit RuvA (192 aa).

The interval 1-61 (MFEYLKGIVT…DTGITLYGFL (61 aa)) is domain I. Residues 62–137 (SLEDKELFLK…KLGDYVKKST (76 aa)) form a domain II region. A flexible linker region spans residues 137 to 140 (TAAA). The interval 141–192 (DLTPSLQDALLALVALGYTQKEVDRITPKLAKLPENTADGYVKEALALLLKK) is domain III.

It belongs to the RuvA family. In terms of assembly, homotetramer. Forms an RuvA(8)-RuvB(12)-Holliday junction (HJ) complex. HJ DNA is sandwiched between 2 RuvA tetramers; dsDNA enters through RuvA and exits via RuvB. An RuvB hexamer assembles on each DNA strand where it exits the tetramer. Each RuvB hexamer is contacted by two RuvA subunits (via domain III) on 2 adjacent RuvB subunits; this complex drives branch migration. In the full resolvosome a probable DNA-RuvA(4)-RuvB(12)-RuvC(2) complex forms which resolves the HJ.

The protein localises to the cytoplasm. The RuvA-RuvB-RuvC complex processes Holliday junction (HJ) DNA during genetic recombination and DNA repair, while the RuvA-RuvB complex plays an important role in the rescue of blocked DNA replication forks via replication fork reversal (RFR). RuvA specifically binds to HJ cruciform DNA, conferring on it an open structure. The RuvB hexamer acts as an ATP-dependent pump, pulling dsDNA into and through the RuvAB complex. HJ branch migration allows RuvC to scan DNA until it finds its consensus sequence, where it cleaves and resolves the cruciform DNA. The sequence is that of Holliday junction branch migration complex subunit RuvA from Lactobacillus johnsonii (strain CNCM I-12250 / La1 / NCC 533).